A 303-amino-acid polypeptide reads, in one-letter code: Elongation factor Ts (303 aa).

An involved in Mg(2+) ion dislocation from EF-Tu region spans residues 82–85 (TDFV).

This sequence belongs to the EF-Ts family.

The protein resides in the cytoplasm. Functionally, associates with the EF-Tu.GDP complex and induces the exchange of GDP to GTP. It remains bound to the aminoacyl-tRNA.EF-Tu.GTP complex up to the GTP hydrolysis stage on the ribosome. The sequence is that of Elongation factor Ts from Clostridioides difficile (strain 630) (Peptoclostridium difficile).